The chain runs to 347 residues: GMP reductase (347 aa).

108-131 (ADFIKLSEILAMSEELNFICIDIA) contacts NADP(+). K(+) is bound by residues Gly-181 and Gly-183. Cys-186 (thioimidate intermediate) is an active-site residue. 216–239 (IIGDGGCSCAGDVAKAFGGGADFV) lines the NADP(+) pocket.

This sequence belongs to the IMPDH/GMPR family. GuaC type 1 subfamily. As to quaternary structure, homotetramer.

It carries out the reaction IMP + NH4(+) + NADP(+) = GMP + NADPH + 2 H(+). In terms of biological role, catalyzes the irreversible NADPH-dependent deamination of GMP to IMP. It functions in the conversion of nucleobase, nucleoside and nucleotide derivatives of G to A nucleotides, and in maintaining the intracellular balance of A and G nucleotides. This is GMP reductase from Shewanella halifaxensis (strain HAW-EB4).